Here is a 159-residue protein sequence, read N- to C-terminus: Endoribonuclease YbeY (159 aa).

3 residues coordinate Zn(2+): His-125, His-129, and His-135.

This sequence belongs to the endoribonuclease YbeY family. Zn(2+) serves as cofactor.

The protein localises to the cytoplasm. Functionally, single strand-specific metallo-endoribonuclease involved in late-stage 70S ribosome quality control and in maturation of the 3' terminus of the 16S rRNA. The sequence is that of Endoribonuclease YbeY from Thermoanaerobacter pseudethanolicus (strain ATCC 33223 / 39E) (Clostridium thermohydrosulfuricum).